A 94-amino-acid chain; its full sequence is Cytochrome c-551 (94 aa).

Positions 1–14 are cleaved as a signal peptide; that stretch reads MAFTAMTVAPSALA. Positions 24, 27, 28, and 73 each coordinate heme c.

Binds 1 heme c group covalently per subunit.

Functionally, efficiently couple electron transfer between the cytochrome bc1 complex and the photosynthetic reaction center. In Allochromatium vinosum (strain ATCC 17899 / DSM 180 / NBRC 103801 / NCIMB 10441 / D) (Chromatium vinosum), this protein is Cytochrome c-551.